A 417-amino-acid polypeptide reads, in one-letter code: Phosphoglycerate kinase 1 (417 aa).

Ser2 carries the N-acetylserine modification. Residues Ser2 and Ser4 each carry the phosphoserine modification. An N6-succinyllysine modification is found at Lys6. Lys11 is modified (N6-acetyllysine). (2R)-3-phosphoglycerate contacts are provided by Val23, Asp24, Phe25, Asn26, Gln38, and Arg39. The mitochondrial targeting region exposed following cis-trans isomerization by PIN1 and recognized by the TOM complex for mitochondrial translocation of the protein stretch occupies residues 38–43 (QRIKAA). The residue at position 48 (Lys48) is an N6-acetyllysine; alternate. Lys48 bears the N6-succinyllysine; alternate mark. Ser62, His63, Gly65, and Arg66 together coordinate (2R)-3-phosphoglycerate. Lys75 bears the N6-acetyllysine mark. A Phosphotyrosine modification is found at Tyr76. 2 positions are modified to N6-acetyllysine: Lys86 and Lys91. Lys97 carries the N6-acetyllysine; alternate modification. Lys97 carries the post-translational modification N6-(2-hydroxyisobutyryl)lysine; alternate. (2R)-3-phosphoglycerate-binding residues include Leu122 and Arg123. Residue Lys131 is modified to N6-acetyllysine; alternate. N6-malonyllysine; alternate is present on Lys131. Lys146 carries the post-translational modification N6-acetyllysine. (2R)-3-phosphoglycerate is bound by residues His170 and Arg171. Lys191 is modified (N6-succinyllysine). Position 196 is a phosphotyrosine (Tyr196). Lys199 is modified (N6-acetyllysine). Ser203 carries the phosphoserine modification. Gly214 provides a ligand contact to ADP. Gly214 contributes to the CDP binding site. Ala215 and Lys216 together coordinate AMP. Ala215 lines the ATP pocket. Ala215 contacts Mg(2+). Lys216 is modified (N6-(2-hydroxyisobutyryl)lysine). Mg(2+) contacts are provided by Ala218 and Asp219. CDP is bound at residue Asp219. Residue Lys220 participates in AMP binding. Residue Lys220 participates in ATP binding. Lys220 carries the N6-(2-hydroxyisobutyryl)lysine modification. Position 238 (Gly238) interacts with ADP. Position 238 (Gly238) interacts with CDP. Residue Gly239 coordinates AMP. Gly239 serves as a coordination point for ATP. Residues Lys267 and Lys291 each carry the N6-acetyllysine modification. Gly313 lines the AMP pocket. Position 313 (Gly313) interacts with ATP. Lys323 carries the N6-(2-hydroxyisobutyryl)lysine modification. Positions 338, 340, and 343 each coordinate CDP. Residue Phe343 participates in ADP binding. Residue Glu344 coordinates AMP. Glu344 is a binding site for ATP. Lys361 carries the post-translational modification N6-acetyllysine. The ATP site is built by Asp375 and Thr376. Asp375 serves as a coordination point for Mg(2+).

It belongs to the phosphoglycerate kinase family. As to quaternary structure, monomer. Interacts with kinase MAPK1/ERK2; the interaction is direct, occurs under hypoxic conditions, and promotes its interaction with PIN1. Interacts with peptidyl-prolyl cis-trans isomerase PIN1; the interaction is direct, occurs under hypoxic conditions, and targets the protein to the mitochondrion by promoting interactions with the TOM complex. Interacts with mitochondrial circRNA mcPGK1 (via its 2nd stem-loop); the interaction is direct and targets the protein to the mitochondrion by promoting interactions with the TOM complex. Interacts with pyruvate dehydrogenase kinase PDK1; the interaction is direct, occurs under hypoxic conditions and leads to PDK1-mediated inhibition of pyruvate dehydrogenase complex activity. Mg(2+) serves as cofactor. Phosphorylated at Ser-203 by MAPK1/ERK2 under hypoxic conditions, which promotes its mitochondrial targeting.

The protein localises to the cytoplasm. Its subcellular location is the cytosol. It is found in the mitochondrion matrix. The catalysed reaction is (2R)-3-phosphoglycerate + ATP = (2R)-3-phospho-glyceroyl phosphate + ADP. It catalyses the reaction L-seryl-[protein] + ATP = O-phospho-L-seryl-[protein] + ADP + H(+). The protein operates within carbohydrate degradation; glycolysis; pyruvate from D-glyceraldehyde 3-phosphate: step 2/5. In terms of biological role, catalyzes one of the two ATP producing reactions in the glycolytic pathway via the reversible conversion of 1,3-diphosphoglycerate to 3-phosphoglycerate. Both L- and D- forms of purine and pyrimidine nucleotides can be used as substrates, but the activity is much lower on pyrimidines. In addition to its role as a glycolytic enzyme, it seems that PGK-1 acts as a polymerase alpha cofactor protein (primer recognition protein). Acts as a protein kinase when localized to the mitochondrion where it phosphorylates pyruvate dehydrogenase kinase PDK1 to inhibit pyruvate dehydrogenase complex activity and suppress the formation of acetyl-coenzyme A from pyruvate, and consequently inhibit oxidative phosphorylation and promote glycolysis. May play a role in sperm motility. This chain is Phosphoglycerate kinase 1 (PGK1), found in Cricetulus griseus (Chinese hamster).